A 134-amino-acid polypeptide reads, in one-letter code: Large ribosomal subunit protein bL12 (134 aa).

This sequence belongs to the bacterial ribosomal protein bL12 family. In terms of assembly, homodimer. Part of the ribosomal stalk of the 50S ribosomal subunit. Forms a multimeric L10(L12)X complex, where L10 forms an elongated spine to which 2 to 4 L12 dimers bind in a sequential fashion. Binds GTP-bound translation factors.

In terms of biological role, forms part of the ribosomal stalk which helps the ribosome interact with GTP-bound translation factors. Is thus essential for accurate translation. This Chlamydia abortus (strain DSM 27085 / S26/3) (Chlamydophila abortus) protein is Large ribosomal subunit protein bL12.